The following is a 362-amino-acid chain: Phosphoserine aminotransferase (362 aa).

Arg43 lines the L-glutamate pocket. Pyridoxal 5'-phosphate is bound by residues 77–78 (AS), Trp103, Thr153, Asp173, and Gln196. An N6-(pyridoxal phosphate)lysine modification is found at Lys197. 238–239 (NT) lines the pyridoxal 5'-phosphate pocket.

It belongs to the class-V pyridoxal-phosphate-dependent aminotransferase family. SerC subfamily. As to quaternary structure, homodimer. The cofactor is pyridoxal 5'-phosphate.

It is found in the cytoplasm. The enzyme catalyses O-phospho-L-serine + 2-oxoglutarate = 3-phosphooxypyruvate + L-glutamate. It catalyses the reaction 4-(phosphooxy)-L-threonine + 2-oxoglutarate = (R)-3-hydroxy-2-oxo-4-phosphooxybutanoate + L-glutamate. It functions in the pathway amino-acid biosynthesis; L-serine biosynthesis; L-serine from 3-phospho-D-glycerate: step 2/3. Catalyzes the reversible conversion of 3-phosphohydroxypyruvate to phosphoserine and of 3-hydroxy-2-oxo-4-phosphonooxybutanoate to phosphohydroxythreonine. This Lysinibacillus sphaericus (strain C3-41) protein is Phosphoserine aminotransferase.